Consider the following 241-residue polypeptide: MKLGKVERLLRSRVESGEKLFLLLSDPEKPISPNTVKLFEENGADVLLIGGSLNVTPYDIDEYIARLRVEGVKLPIVLFPGGLNNIAKSADAILFMTLMNSMDPYWIVGAQVAAAPIVYRLGLEAIPSAYIIVGHGGAAGHIGRALPIPYENGYIAAAYALAAEYLGARLVYFEAGSGAPKPVPVDAVAAASKVLSQALLVVGGGIREETLAAERLKAGADGVVIGTLAEKDPEKALRSSR.

Residues aspartate 26 and serine 52 each coordinate Mg(2+). Residues 172-178 (YFEAGSG), 204-205 (GG), and 226-227 (GT) each bind sn-glycerol 1-phosphate.

Belongs to the GGGP/HepGP synthase family. Group II subfamily. Mg(2+) serves as cofactor.

It is found in the cytoplasm. It catalyses the reaction sn-glycerol 1-phosphate + (2E,6E,10E)-geranylgeranyl diphosphate = sn-3-O-(geranylgeranyl)glycerol 1-phosphate + diphosphate. It participates in membrane lipid metabolism; glycerophospholipid metabolism. Its function is as follows. Prenyltransferase that catalyzes the transfer of the geranylgeranyl moiety of geranylgeranyl diphosphate (GGPP) to the C3 hydroxyl of sn-glycerol-1-phosphate (G1P). This reaction is the first ether-bond-formation step in the biosynthesis of archaeal membrane lipids. This chain is Geranylgeranylglyceryl phosphate synthase, found in Hyperthermus butylicus (strain DSM 5456 / JCM 9403 / PLM1-5).